The sequence spans 531 residues: MGLHVTLQGLAGLLLLLYALPWAEGGKVLVFPMEGSHWLSMRDVVRELHARGHQAVVLAPEVTVHIKEEDFFTLQTYPVPYTRQGFRQQMMRNIKVVFETGNYVKTFLETSEILKNISTVLLRSCMNLLHNGSLLQHLNSSSFDMVLTDPVIPCGQVLAKYLGIPTVFFLRYIPCGIDSEATQCPKPSSYIPNLLTMLSDHMTFLQRVKNMLYPLALKYICHFSFTRYESLASELLQREVSLVEVLSHASVWLFRGDFVFDYPRPVMPNMVFIGGINCVIKKPLSQEFEAYVNASGEHGIVVFSLGSMVSEIPEKKAMEIAEALGRIPQTLLWRYTGTRPSNLAKNTILVKWLPQNDLLGHPKARAFITHSGSHGIYEGICNGVPMVMMPLFGDQMDNAKRMETRGAGVTLNVLEMTADDLENALKTVINNKSYKENIMRLSSLHKDRPIEPLDLAVFWVEYVMRHKGAPHLRPAAHDLTWYQYHSLDVIGFLLAIVLTVVFIVYKSCAYGCRKCFGGKGRVKKSHKSKTH.

A signal peptide spans 1–25 (MGLHVTLQGLAGLLLLLYALPWAEG). N-linked (GlcNAc...) asparagine glycosylation is found at Asn-116, Asn-131, Asn-139, Asn-293, and Asn-431. A helical transmembrane segment spans residues 489 to 505 (VIGFLLAIVLTVVFIVY).

This sequence belongs to the UDP-glycosyltransferase family. In terms of assembly, homodimer. Homooligomer. Interacts with UGT1A1, UGT1A3, UGT1A4, UGT1A6, UGT1A7, UGT1A8, UGT1A9 and UGT1A10 to form heterodimers.

The protein resides in the endoplasmic reticulum membrane. The catalysed reaction is glucuronate acceptor + UDP-alpha-D-glucuronate = acceptor beta-D-glucuronoside + UDP + H(+). It carries out the reaction zolasartan + UDP-alpha-D-glucuronate = zolarsartan-1-N-beta-D-glucuronide + UDP. Its function is as follows. UDP-glucuronosyltransferase (UGT) that catalyzes phase II biotransformation reactions in which lipophilic substrates are conjugated with glucuronic acid to increase the metabolite's water solubility, thereby facilitating excretion into either the urine or bile. Essential for the elimination and detoxification of drugs, xenobiotics and endogenous compounds. Involved in the glucuronidation of the AGTR1 angiotensin receptor antagonist zolarsatan, a drug which can inhibit the effect of angiotensin II. This is UDP-glucuronosyltransferase 1A5 from Rattus norvegicus (Rat).